The chain runs to 155 residues: Ribosome maturation factor RimP (155 aa).

Belongs to the RimP family.

It localises to the cytoplasm. Functionally, required for maturation of 30S ribosomal subunits. The polypeptide is Ribosome maturation factor RimP (Lachnoclostridium phytofermentans (strain ATCC 700394 / DSM 18823 / ISDg) (Clostridium phytofermentans)).